The sequence spans 113 residues: Putative insulin-like growth factor 2-associated protein (113 aa).

In terms of tissue distribution, expressed in fetal and adult liver.

In Homo sapiens (Human), this protein is Putative insulin-like growth factor 2-associated protein.